The following is a 451-amino-acid chain: DNA double-strand break repair protein Mre11 (451 aa).

Residues D8, H10, D49, and N84 each coordinate Mn(2+). H85 serves as the catalytic Proton donor. Mn(2+)-binding residues include H168, H198, and H200. The segment at R374–G451 is disordered. Over residues G396 to V416 the composition is skewed to acidic residues.

The protein belongs to the MRE11/RAD32 family. As to quaternary structure, homodimer. Forms a heterotetramer composed of two Mre11 subunits and two Rad50 subunits. The cofactor is Mn(2+).

Its activity is regulated as follows. Nuclease activity is regulated by Rad50. Part of the Rad50/Mre11 complex, which is involved in the early steps of DNA double-strand break (DSB) repair. The complex may facilitate opening of the processed DNA ends to aid in the recruitment of HerA and NurA. Mre11 binds to DSB ends and has both double-stranded 3'-5' exonuclease activity and single-stranded endonuclease activity. The sequence is that of DNA double-strand break repair protein Mre11 from Methanopyrus kandleri (strain AV19 / DSM 6324 / JCM 9639 / NBRC 100938).